The chain runs to 247 residues: 14-3-3 protein gamma-A (247 aa).

The protein belongs to the 14-3-3 family. In terms of assembly, homodimer, and heterodimer with other family members.

The protein resides in the cytoplasm. In terms of biological role, adapter protein implicated in the regulation of a large spectrum of both general and specialized signaling pathways. Binds to a large number of partners, usually by recognition of a phosphoserine or phosphothreonine motif. Binding generally results in the modulation of the activity of the binding partner. The chain is 14-3-3 protein gamma-A (ywhag-a) from Xenopus laevis (African clawed frog).